A 758-amino-acid chain; its full sequence is MTTPQAKPIDSYRKYWASRFGTAPFLPMTRAEMDELGWDSCDIILVTGDCYIDHPSFGMALVGRLLEAQGFRVGIIAQPDWHSADAFRELGKPNLFFGVTAGNMDSMINRYTADRRPRSDDAYTPNAEPNKRPDRAVTVYAQRCREAYPGIGVMIGSIEASLRRIAHYDYWSDKVRQSVLITSKADILLYGNAERALVEIAHRAAKGEKLSEMRDIRGTAFIVPHGWRPDEEWQEMDSSVVDIPGRVDPHLNPYQEIPEQAAEATKGIDPSKPQVIRIESREERLAKRRAERAKTVIRIPAYEAVAHDPVLYAHASRTLHLESNPGNARALVQMHGERDVWLTPPPIPLTTEEMDFVYGLPYARNPHPAYGDAHIPAWEMIKYSVNIMRGCFGGCTFCSITEHEGRIIQSRSEESILHEIEEIRDKTPGFTGHISDLGGPTANMYRLSCKDPKIERSCRKLSCVFPDICENLNTDHSHLIQLYRKARALPGVKKINIQSGLRYDLAVRSPEYIKELVQHHVGGYLKIAPEHTEDGPLSKMMKPGMGAYDKFKELFERFSRQAGKEQYLIPYFIAAHPGTSDEDMMNLALWLKKNNFRLDQVQTFTPTPMAMATTMWHTRRNPLKRLSRSSEKVDVVRDGYRRKLHKAFLRYHHPDNWQIIHDALIQMGRSDLIGHSKHCLIPPTPPGDKAAAVRHKMGAPMNRGKSPGARHPQQGQRAKPAAAVGARGQGGQGGRPGAGKPQAGRSPAKPGGKTSRSR.

Residues 377–642 (AWEMIKYSVN…VDVVRDGYRR (266 aa)) enclose the Radical SAM core domain. Cys391, Cys395, and Cys398 together coordinate [4Fe-4S] cluster. The tract at residues 698-758 (GAPMNRGKSP…KPGGKTSRSR (61 aa)) is disordered. A compositionally biased stretch (gly residues) spans 727-737 (RGQGGQGGRPG).

It belongs to the UPF0313 family. [4Fe-4S] cluster serves as cofactor.

This chain is UPF0313 protein CV_1738, found in Chromobacterium violaceum (strain ATCC 12472 / DSM 30191 / JCM 1249 / CCUG 213 / NBRC 12614 / NCIMB 9131 / NCTC 9757 / MK).